Here is a 535-residue protein sequence, read N- to C-terminus: Cytochrome P450 71C3 (535 aa).

Residues 23–43 form a helical membrane-spanning segment; that stretch reads QTLTLLLIAVPTVLLLLASLA. Cysteine 475 contacts heme.

It belongs to the cytochrome P450 family. Requires heme as cofactor.

It localises to the membrane. It functions in the pathway secondary metabolite biosynthesis; 2,4-dihydroxy-1,4-benzoxazin-3-one biosynthesis; 2,4-dihydroxy-1,4-benzoxazin-3-one from indoleglycerol phosphate: step 5/5. Catalyzes the conversion of 2-hydroxy-1,4-benzoxazin-3-one (HBOA) to 2,4-dihydroxy-1,4-benzoxazin-3-one (DIBOA). The sequence is that of Cytochrome P450 71C3 (CYP71C3) from Zea mays (Maize).